Here is a 371-residue protein sequence, read N- to C-terminus: Cytochrome b (371 aa).

A run of 4 helical transmembrane segments spans residues 25-45 (FGSMLLICLTLQIMTGFFLAI), 69-90 (WIMQNLHTIGASMFFICIYTHI), 105-125 (WLSGTTLLITLMATAFFGYVL), and 170-190 (FFALHFIIPFAIISLSSIHII). 2 residues coordinate heme b: His75 and His89. Residues His174 and His188 each coordinate heme b. His193 serves as a coordination point for a ubiquinone. A run of 4 helical transmembrane segments spans residues 218–238 (YKDTLTSTFMLITLFIILSFT), 280–300 (LGGTLALLMSVIILTTMPFTH), 312–332 (LAQTMFWMLIATFITITWTAS), and 339–358 (FIIISQTTSIFYFSFFIMNP).

Belongs to the cytochrome b family. In terms of assembly, the cytochrome bc1 complex contains 3 respiratory subunits (MT-CYB, CYC1 and UQCRFS1), 2 core proteins (UQCRC1 and UQCRC2) and probably 6 low-molecular weight proteins. It depends on heme b as a cofactor.

It is found in the mitochondrion inner membrane. Functionally, component of the ubiquinol-cytochrome c reductase complex (complex III or cytochrome b-c1 complex) that is part of the mitochondrial respiratory chain. The b-c1 complex mediates electron transfer from ubiquinol to cytochrome c. Contributes to the generation of a proton gradient across the mitochondrial membrane that is then used for ATP synthesis. This is Cytochrome b (MT-CYB) from Sinomicrurus macclellandi (Macclelland's coral snake).